The primary structure comprises 1172 residues: RNA polymerase-associated protein CTR9 homolog (1172 aa).

TPR repeat units lie at residues 41–75, 129–162, 163–196, 198–231, 235–268, 306–339, 341–374, 412–444, 451–484, 497–530, 531–564, 566–598, 613–646, 648–680, 681–714, and 717–750; these read LHIW…NLDY, NHLL…SPNN, IPAL…NPGC, AGVR…NPTC, LVGL…DPSN, AESC…AAAS, VLPF…YPNN, VEAW…LQEK, PEIL…AKAE, VTTT…HPNY, VDCY…NQDH, DAWS…PSTQ, QTLH…DSKN, YAAN…TADI, SDVW…FYKH, and TEVL…APND. The tract at residues 889–1172 is disordered; the sequence is LNFTGEMETP…KSDRGSDDSD (284 aa). The segment covering 921 to 932 has biased composition (acidic residues); sequence FDEFVNDDSDED. The segment covering 944–954 has biased composition (gly residues); sequence GGSSGSGGEQG. Basic residues-rich tracts occupy residues 965–975 and 991–1001; these read KKKKKRRKRPQ and PKKRQPKKREK. Residues 1032–1042 show a composition bias toward basic and acidic residues; the sequence is DKLKIADEGHG. 3 stretches are compositionally biased toward polar residues: residues 1068-1093, 1105-1134, and 1149-1159; these read DNAN…SDNN, GSDN…PESQ, and ASPNESEQEAS. The span at 1160–1172 shows a compositional bias: basic and acidic residues; that stretch reads NNEKSDRGSDDSD.

As to quaternary structure, component of the PAF1 complex, which at least consists of cdc73, paf1, leo1, ctr9 and rtf1. The PAF1 complex interacts with PHF5A.

It localises to the nucleus speckle. Component of the PAF1 complex (PAF1C) which has multiple functions during transcription by RNA polymerase II. PAF1C associates with RNA polymerase II, is involved in transcriptional elongation and in histone modifications including methylation on histone H3 'Lys-4' (H3K4me3). This Xenopus tropicalis (Western clawed frog) protein is RNA polymerase-associated protein CTR9 homolog (ctr9).